Here is a 105-residue protein sequence, read N- to C-terminus: ATP-dependent Clp protease adapter protein ClpS (105 aa).

The protein belongs to the ClpS family. Binds to the N-terminal domain of the chaperone ClpA.

In terms of biological role, involved in the modulation of the specificity of the ClpAP-mediated ATP-dependent protein degradation. This Prochlorococcus marinus (strain MIT 9515) protein is ATP-dependent Clp protease adapter protein ClpS.